The chain runs to 226 residues: Glutathione S-transferase kappa 1 (226 aa).

Residue 16-18 participates in glutathione binding; the sequence is SPY. K36 and K49 each carry N6-succinyllysine. N53 lines the glutathione pocket. N6-acetyllysine; alternate is present on residues K68 and K74. An N6-succinyllysine; alternate mark is found at K68 and K74. K85 is modified (N6-acetyllysine). An N6-acetyllysine; alternate mark is found at K93 and K116. K93 and K116 each carry N6-succinyllysine; alternate. K144 bears the N6-succinyllysine mark. Residue K158 is modified to N6-acetyllysine; alternate. K158 carries the N6-succinyllysine; alternate modification. K165 bears the N6-acetyllysine mark. N6-acetyllysine; alternate is present on residues K167 and K177. K167 and K177 each carry N6-succinyllysine; alternate. L183 contacts glutathione. K193 carries the post-translational modification N6-succinyllysine. 200-201 contributes to the glutathione binding site; sequence SD.

This sequence belongs to the GST superfamily. Kappa family. As to quaternary structure, homodimer.

It localises to the mitochondrion matrix. The enzyme catalyses RX + glutathione = an S-substituted glutathione + a halide anion + H(+). In terms of biological role, glutathione S-transferase that catalyzes the conjugation of glutathione to exogenous and endogenous compounds. The sequence is that of Glutathione S-transferase kappa 1 (Gstk1) from Rattus norvegicus (Rat).